A 535-amino-acid polypeptide reads, in one-letter code: Keratin, type II cytoskeletal 79 (535 aa).

Polar residues-rich tracts occupy residues 1–12 (MRSSVSRQTYST) and 28–38 (QARTSFSSVTV). Residues 1 to 53 (MRSSVSRQTYSTKGAFSSSSASGGGGSQARTSFSSVTVSRNSGRGGGPRCGPS) form a disordered region. The head stretch occupies residues 1-141 (MRSSVSRQTY…DPEIQRVRTE (141 aa)). Residues 43–53 (GRGGGPRCGPS) show a composition bias toward gly residues. The tract at residues 142-177 (EREQIKTLNNKFASFIDKVRFLEQQNKVLETKWALL) is coil 1A. One can recognise an IF rod domain in the interval 142 to 457 (EREQIKTLNN…KLLESEESRM (316 aa)). Residues 178–198 (QEQGQKSGVTRNNLEPLFEHF) form a linker 1 region. Positions 199-290 (INNLRGKLDN…HLYEEELSQV (92 aa)) are coil 1B. Positions 291–314 (QTHVSDTSVILSMDNNRNLDLDSI) are linker 12. The segment at 315–453 (IAEVKAQYEQ…ATYRKLLESE (139 aa)) is coil 2. Positions 454-535 (ESRMSGECPS…TTVKTSSRRY (82 aa)) are tail.

It belongs to the intermediate filament family. Heterotetramer of two type I and two type II keratins.

This Bos taurus (Bovine) protein is Keratin, type II cytoskeletal 79 (KRT79).